The sequence spans 62 residues: Photosystem II reaction center protein Z (62 aa).

A run of 2 helical transmembrane segments spans residues 8 to 28 and 41 to 61; these read VLTALVFFSFVMVVAVPVAYA and YVGSAIWIGLVLLVAILNFLV.

This sequence belongs to the PsbZ family. As to quaternary structure, PSII is composed of 1 copy each of membrane proteins PsbA, PsbB, PsbC, PsbD, PsbE, PsbF, PsbH, PsbI, PsbJ, PsbK, PsbL, PsbM, PsbT, PsbX, PsbY, PsbZ, Psb30/Ycf12, peripheral proteins PsbO, CyanoQ (PsbQ), PsbU, PsbV and a large number of cofactors. It forms dimeric complexes.

Its subcellular location is the cellular thylakoid membrane. Functionally, may control the interaction of photosystem II (PSII) cores with the light-harvesting antenna, regulates electron flow through the 2 photosystem reaction centers. PSII is a light-driven water plastoquinone oxidoreductase, using light energy to abstract electrons from H(2)O, generating a proton gradient subsequently used for ATP formation. This chain is Photosystem II reaction center protein Z, found in Crocosphaera subtropica (strain ATCC 51142 / BH68) (Cyanothece sp. (strain ATCC 51142)).